The chain runs to 1051 residues: Lateral signaling target protein 2 homolog (1051 aa).

4 disordered regions span residues 305 to 440 (PLGS…DEDL), 516 to 552 (GSNA…PSTS), 566 to 703 (HLPS…NASS), and 837 to 968 (IDLA…DGKA). Over residues 319-358 (NNTSSSTSNNNNNNNNNSSSSSSSSSGSGSNTAKTSTSST) the composition is skewed to low complexity. The span at 360 to 370 (KAVERLVDHRN) shows a compositional bias: basic and acidic residues. Polar residues predominate over residues 371–391 (NNSSTVAGATQPSTARSPSML). Composition is skewed to low complexity over residues 392–401 (SLSAGSTPTA) and 409–428 (PSHS…NPPA). The segment covering 518–528 (NAATERQQQQQ) has biased composition (polar residues). Composition is skewed to low complexity over residues 533 to 549 (LQPG…QDEP) and 568 to 582 (PSSS…SSNQ). Residues S569 and S570 each carry the phosphoserine modification. The segment covering 583–596 (QTTIKTPNGNQSMP) has biased composition (polar residues). Residues 597–606 (NSSSSSSNHN) show a composition bias toward low complexity. 2 stretches are compositionally biased toward basic residues: residues 607–637 (NNRH…HPHH) and 650–672 (HHHH…ARKR). The segment covering 692-703 (TPGSADTSNASS) has biased composition (polar residues). The span at 840–852 (ASGNNNGNSNAAA) shows a compositional bias: low complexity. Phosphoserine is present on S861. Low complexity-rich tracts occupy residues 879–924 (QQQQ…SPIS) and 937–960 (SSIG…MSPP). The FYVE-type zinc-finger motif lies at 965–1025 (DGKAPRCMSC…VCRECYVREV (61 aa)). 8 residues coordinate Zn(2+): C971, C974, C987, C990, C995, C998, C1017, and C1020. The disordered stretch occupies residues 1028-1051 (SRQAPAQPSQAHGQASRPQAASAS).

It belongs to the lst-2 family.

Negative regulator of epidermal growth factor receptor (EGFR) signaling. The protein is Lateral signaling target protein 2 homolog of Drosophila mojavensis (Fruit fly).